A 510-amino-acid chain; its full sequence is Arginine biosynthesis bifunctional protein ArgJ, mitochondrial (510 aa).

The segment covering 57-70 has biased composition (polar residues); that stretch reads TSTNEPSAATTNVP. The interval 57–76 is disordered; sequence TSTNEPSAATTNVPHPQEAP. Residues threonine 222, lysine 248, threonine 267, and glutamate 364 each contribute to the substrate site. Threonine 267 serves as the catalytic Nucleophile.

Belongs to the ArgJ family. In terms of assembly, heterodimer of an alpha and a beta chain. Post-translationally, the alpha and beta chains are autoproteolytically processed from a single precursor protein within the mitochondrion.

It localises to the mitochondrion matrix. It catalyses the reaction N(2)-acetyl-L-ornithine + L-glutamate = N-acetyl-L-glutamate + L-ornithine. The enzyme catalyses L-glutamate + acetyl-CoA = N-acetyl-L-glutamate + CoA + H(+). It functions in the pathway amino-acid biosynthesis; L-arginine biosynthesis; L-ornithine and N-acetyl-L-glutamate from L-glutamate and N(2)-acetyl-L-ornithine (cyclic): step 1/1. The protein operates within amino-acid biosynthesis; L-arginine biosynthesis; N(2)-acetyl-L-ornithine from L-glutamate: step 1/4. Catalyzes two activities which are involved in the cyclic version of arginine biosynthesis: the synthesis of acetylglutamate from glutamate and acetyl-CoA, and of ornithine by transacetylation between acetylornithine and glutamate. This chain is Arginine biosynthesis bifunctional protein ArgJ, mitochondrial, found in Malassezia globosa (strain ATCC MYA-4612 / CBS 7966) (Dandruff-associated fungus).